A 430-amino-acid polypeptide reads, in one-letter code: Adenylosuccinate synthetase (430 aa).

Residues 13 to 19 and 41 to 43 each bind GTP; these read GDEGKGK and GHT. D14 acts as the Proton acceptor in catalysis. Residues D14 and G41 each coordinate Mg(2+). IMP-binding positions include 14–17, 39–42, T130, R144, Q225, T240, and R304; these read DEGK and NAGH. The Proton donor role is filled by H42. Substrate is bound at residue 300–306; it reads ATTGRAR. GTP contacts are provided by residues R306, 332–334, and 414–416; these read KLD and STG.

Belongs to the adenylosuccinate synthetase family. In terms of assembly, homodimer. Mg(2+) serves as cofactor.

The protein resides in the cytoplasm. The enzyme catalyses IMP + L-aspartate + GTP = N(6)-(1,2-dicarboxyethyl)-AMP + GDP + phosphate + 2 H(+). It participates in purine metabolism; AMP biosynthesis via de novo pathway; AMP from IMP: step 1/2. Its function is as follows. Plays an important role in the de novo pathway of purine nucleotide biosynthesis. Catalyzes the first committed step in the biosynthesis of AMP from IMP. In Pseudomonas syringae pv. syringae (strain B728a), this protein is Adenylosuccinate synthetase.